Consider the following 306-residue polypeptide: Voltage-dependent anion channel-forming protein RSc3414 (306 aa).

Helical transmembrane passes span 28 to 48 (LFLI…WLPI), 50 to 70 (VNLS…FLGF), 213 to 233 (YSVM…FGLV), and 239 to 259 (FTPV…AIAA).

It belongs to the anion channel-forming bestrophin (TC 1.A.46) family.

It localises to the cell membrane. In Ralstonia nicotianae (strain ATCC BAA-1114 / GMI1000) (Ralstonia solanacearum), this protein is Voltage-dependent anion channel-forming protein RSc3414.